Here is a 449-residue protein sequence, read N- to C-terminus: Heterogeneous nuclear ribonucleoprotein H2 (449 aa).

At Met-1 the chain carries N-acetylmethionine. Met-2 carries the N-acetylmethionine; in Heterogeneous nuclear ribonucleoprotein H2, N-terminally processed modification. Residues 11–90 form the RRM 1 domain; sequence FVVKVRGLPW…RYVEVFKSNS (80 aa). The residue at position 23 (Ser-23) is a Phosphoserine. Lys-35 is covalently cross-linked (Glycyl lysine isopeptide (Lys-Gly) (interchain with G-Cter in SUMO2)). A phosphoserine mark is found at Ser-54 and Ser-63. A Glycyl lysine isopeptide (Lys-Gly) (interchain with G-Cter in SUMO2) cross-link involves residue Lys-87. Ser-90 bears the Phosphoserine mark. Lys-98 participates in a covalent cross-link: Glycyl lysine isopeptide (Lys-Gly) (interchain with G-Cter in SUMO2). Residues 111-188 enclose the RRM 2 domain; sequence GFVRLRGLPF…RYIEIFKSSR (78 aa). At Arg-233 the chain carries Dimethylated arginine; alternate. At Arg-233 the chain carries Omega-N-methylarginine; alternate. A 1-1 repeat occupies 234 to 249; the sequence is GAYGGGYGGYDDYGGY. Residues 234–433 form a 2 X 16 AA Gly-rich approximate repeats region; it reads GAYGGGYGGY…YGGQSSMSGY (200 aa). Phosphotyrosine is present on Tyr-246. Positions 289–364 constitute an RRM 3 domain; the sequence is HCVHMRGLPY…RYVELFLNST (76 aa). Ser-310 carries the phosphoserine modification. 3 tandem repeats follow at residues 354 to 372, 374 to 392, and 418 to 433. The 2 X 19 AA perfect repeats stretch occupies residues 354–392; sequence HRYVELFLNSTAGTSGGAYDHSYVELFLNSTAGASGGAY.

Component of a ribonucleoprotein complex containing mRNAs and RNA-binding proteins including DDX5, HNRNPH2 and SRSF1 as well as splicing regulator ARVCF. Interacts with TXNL4/DIM1.

It localises to the nucleus. Its subcellular location is the nucleoplasm. This protein is a component of the heterogeneous nuclear ribonucleoprotein (hnRNP) complexes which provide the substrate for the processing events that pre-mRNAs undergo before becoming functional, translatable mRNAs in the cytoplasm. Binds poly(RG). The polypeptide is Heterogeneous nuclear ribonucleoprotein H2 (HNRNPH2) (Bos taurus (Bovine)).